The chain runs to 442 residues: GTPase Obg (442 aa).

One can recognise an Obg domain in the interval 1-158 (MFYDQARIFV…HWLELELKLL (158 aa)). The region spanning 159–329 (ADVGLVGFPN…LIYHVHKGLE (171 aa)) is the OBG-type G domain. Residues 165-172 (GFPNVGKS), 190-194 (FTTLE), 212-215 (DIPG), 282-285 (NKMD), and 310-312 (SAA) contribute to the GTP site. Positions 172 and 192 each coordinate Mg(2+). Positions 349–427 (FTGKTEERFK…IGDLDFDFIE (79 aa)) constitute an OCT domain.

It belongs to the TRAFAC class OBG-HflX-like GTPase superfamily. OBG GTPase family. Monomer. It depends on Mg(2+) as a cofactor.

The protein localises to the cytoplasm. Functionally, an essential GTPase which binds GTP, GDP and possibly (p)ppGpp with moderate affinity, with high nucleotide exchange rates and a fairly low GTP hydrolysis rate. Plays a role in control of the cell cycle, stress response, ribosome biogenesis and in those bacteria that undergo differentiation, in morphogenesis control. The chain is GTPase Obg from Heliobacterium modesticaldum (strain ATCC 51547 / Ice1).